The primary structure comprises 316 residues: Transcription initiation factor IIB (316 aa).

A TFIIB-type zinc finger spans residues 7–38; the sequence is FRLRCPVCGSTDIVFNEETGEYVCARCGTIVL. Zn(2+) is bound by residues cysteine 11, cysteine 14, cysteine 30, and cysteine 33. Positions 51-73 are disordered; sequence FTPEERERRGRTGAPLSPTLHDH. 2 repeat units span residues 124-207 and 218-299.

This sequence belongs to the TFIIB family.

Its function is as follows. Stabilizes TBP binding to an archaeal box-A promoter. Also responsible for recruiting RNA polymerase II to the pre-initiation complex (DNA-TBP-TFIIB). This is Transcription initiation factor IIB from Ignicoccus hospitalis (strain KIN4/I / DSM 18386 / JCM 14125).